Here is a 633-residue protein sequence, read N- to C-terminus: Phosphomethylpyrimidine synthase (633 aa).

Substrate is bound by residues asparagine 245, methionine 274, tyrosine 303, histidine 339, 359–361 (SRG), 400–403 (DGLR), and glutamate 439. Position 443 (histidine 443) interacts with Zn(2+). Tyrosine 466 contributes to the substrate binding site. Zn(2+) is bound at residue histidine 507. Residues cysteine 587, cysteine 590, and cysteine 595 each coordinate [4Fe-4S] cluster.

It belongs to the ThiC family. In terms of assembly, homodimer. [4Fe-4S] cluster serves as cofactor.

It carries out the reaction 5-amino-1-(5-phospho-beta-D-ribosyl)imidazole + S-adenosyl-L-methionine = 4-amino-2-methyl-5-(phosphooxymethyl)pyrimidine + CO + 5'-deoxyadenosine + formate + L-methionine + 3 H(+). It participates in cofactor biosynthesis; thiamine diphosphate biosynthesis. In terms of biological role, catalyzes the synthesis of the hydroxymethylpyrimidine phosphate (HMP-P) moiety of thiamine from aminoimidazole ribotide (AIR) in a radical S-adenosyl-L-methionine (SAM)-dependent reaction. The sequence is that of Phosphomethylpyrimidine synthase from Neisseria gonorrhoeae (strain ATCC 700825 / FA 1090).